The chain runs to 343 residues: Methionine import ATP-binding protein MetN (343 aa).

The ABC transporter domain maps to 2 to 241 (IKLSNITKVF…PKTPLAQKFI (240 aa)). Position 38-45 (38-45 (GASGAGKS)) interacts with ATP.

The protein belongs to the ABC transporter superfamily. Methionine importer (TC 3.A.1.24) family. In terms of assembly, the complex is composed of two ATP-binding proteins (MetN), two transmembrane proteins (MetI) and a solute-binding protein (MetQ).

The protein resides in the cell inner membrane. The catalysed reaction is L-methionine(out) + ATP + H2O = L-methionine(in) + ADP + phosphate + H(+). It catalyses the reaction D-methionine(out) + ATP + H2O = D-methionine(in) + ADP + phosphate + H(+). Part of the ABC transporter complex MetNIQ involved in methionine import. Responsible for energy coupling to the transport system. This is Methionine import ATP-binding protein MetN from Escherichia coli O6:K15:H31 (strain 536 / UPEC).